We begin with the raw amino-acid sequence, 325 residues long: Hexaprenyl-diphosphate synthase large subunit ((2E,6E)-farnesyl-diphosphate specific) (325 aa).

Isopentenyl diphosphate contacts are provided by Lys-45, Arg-48, and His-77. Positions 84, 88, and 93 each coordinate all-trans-hexaprenyl diphosphate. Mg(2+) is bound by residues Asp-84 and Asp-88. Arg-94 is an isopentenyl diphosphate binding site. All-trans-hexaprenyl diphosphate contacts are provided by Lys-170, Thr-171, and Gln-208.

The protein belongs to the FPP/GGPP synthase family. In terms of assembly, dimer of heterodimer or heterotetramer composed of a small (Hexs-a) and large (Hexs-B) subunit. Requires Mg(2+) as cofactor.

It carries out the reaction 3 isopentenyl diphosphate + (2E,6E)-farnesyl diphosphate = all-trans-hexaprenyl diphosphate + 3 diphosphate. Its function is as follows. Catalyzes the condensation of three molecules of isopentenyl diphosphate with farnesyl diphosphate (FPP) to yield (all-E)-hexaprenyl diphosphate (HexPP; C30), the precursor of the prenyl side chain of menaquinone-6. Large subunit Hexs-B catalyzes the condensation reaction and the final product chain length is cooperatively regulated by both the Hexs-A and Hexs-B subunits using the whole size of the hydrophobic cleft as a ruler. This chain is Hexaprenyl-diphosphate synthase large subunit ((2E,6E)-farnesyl-diphosphate specific) (hexs-b), found in Micrococcus luteus (Micrococcus lysodeikticus).